We begin with the raw amino-acid sequence, 433 residues long: Homogentisate 1,2-dioxygenase (433 aa).

The Proton acceptor role is filled by histidine 288. The Fe cation site is built by histidine 331 and glutamate 337. Tyrosine 346 and histidine 367 together coordinate homogentisate. Histidine 367 contributes to the Fe cation binding site.

This sequence belongs to the homogentisate dioxygenase family. In terms of assembly, hexamer; dimer of trimers. The cofactor is Fe cation.

The catalysed reaction is homogentisate + O2 = 4-maleylacetoacetate + H(+). It participates in amino-acid degradation; L-phenylalanine degradation; acetoacetate and fumarate from L-phenylalanine: step 4/6. In terms of biological role, involved in the catabolism of homogentisate (2,5-dihydroxyphenylacetate or 2,5-OH-PhAc), a central intermediate in the degradation of phenylalanine and tyrosine. Catalyzes the oxidative ring cleavage of the aromatic ring of homogentisate to yield maleylacetoacetate. The polypeptide is Homogentisate 1,2-dioxygenase (Pseudomonas putida (strain GB-1)).